The chain runs to 267 residues: Tryptophan 2,3-dioxygenase (267 aa).

Substrate is bound by residues 44 to 48 (FITIH) and Arg-114. A heme-binding site is contributed by His-225. Thr-239 is a binding site for substrate.

The protein belongs to the tryptophan 2,3-dioxygenase family. Homotetramer. Heme serves as cofactor.

The catalysed reaction is L-tryptophan + O2 = N-formyl-L-kynurenine. It functions in the pathway amino-acid degradation; L-tryptophan degradation via kynurenine pathway; L-kynurenine from L-tryptophan: step 1/2. Heme-dependent dioxygenase that catalyzes the oxidative cleavage of the L-tryptophan (L-Trp) pyrrole ring and converts L-tryptophan to N-formyl-L-kynurenine. Catalyzes the oxidative cleavage of the indole moiety. The protein is Tryptophan 2,3-dioxygenase of Nocardioides sp. (strain ATCC BAA-499 / JS614).